The chain runs to 387 residues: 8-amino-7-oxononanoate synthase (387 aa).

Arg19 lines the substrate pocket. Pyridoxal 5'-phosphate is bound at residue 106–107 (GY). His131 lines the substrate pocket. 3 residues coordinate pyridoxal 5'-phosphate: Ser177, His205, and Thr236. Lys239 carries the N6-(pyridoxal phosphate)lysine modification. Thr353 lines the substrate pocket.

It belongs to the class-II pyridoxal-phosphate-dependent aminotransferase family. BioF subfamily. In terms of assembly, homodimer. The cofactor is pyridoxal 5'-phosphate.

The enzyme catalyses 6-carboxyhexanoyl-[ACP] + L-alanine + H(+) = (8S)-8-amino-7-oxononanoate + holo-[ACP] + CO2. It functions in the pathway cofactor biosynthesis; biotin biosynthesis. Functionally, catalyzes the decarboxylative condensation of pimeloyl-[acyl-carrier protein] and L-alanine to produce 8-amino-7-oxononanoate (AON), [acyl-carrier protein], and carbon dioxide. In Nitrosomonas europaea (strain ATCC 19718 / CIP 103999 / KCTC 2705 / NBRC 14298), this protein is 8-amino-7-oxononanoate synthase.